A 2219-amino-acid polypeptide reads, in one-letter code: RNA-directed RNA polymerase L (2219 aa).

Residues 26 to 289 (KLAFLVQTEP…TTEDDVEYLI (264 aa)) form an endonuclease region. Residues Glu-51, Asp-89, and Glu-102 each coordinate Mn(2+). Residue Lys-115 is part of the active site. Positions 1177-1373 (LSMKLNVSLA…YMSDQLNKFV (197 aa)) constitute a RdRp catalytic domain. Asp-1335 is a binding site for Mg(2+).

Belongs to the Bunyavirales RNA polymerase family. In terms of assembly, homomultimer; the oligomeric structure is essential for the polymerase activity. Interacts with nucleoprotein N. Interacts with protein Z; this interaction inhibits viral transcription and replication, Z partially blocks the product exit tunnel for the releasing nascent RNA product. Requires Mn(2+) as cofactor. Mg(2+) is required as a cofactor.

It localises to the virion. The protein resides in the host cytoplasm. It carries out the reaction RNA(n) + a ribonucleoside 5'-triphosphate = RNA(n+1) + diphosphate. Functionally, RNA-dependent RNA polymerase, which is responsible for the replication and transcription of the viral RNA genome using antigenomic RNA as an intermediate. During transcription, synthesizes subgenomic RNAs and assures their capping by a cap-snatching mechanism, which involves the endonuclease activity cleaving the host capped pre-mRNAs. These short capped RNAs are then used as primers for viral transcription. The 3'-end of subgenomic mRNAs molecules are heterogeneous and not polyadenylated. The replicase function is to direct synthesis of antigenomic and genomic RNA which are encapsidated and non capped. As a consequence of the use of the same enzyme for both transcription and replication, these mechanisms need to be well coordinated. These processes may be regulated by proteins N and Z in a dose-dependent manner. Z protein inhibits the viral polymerase L und thus the viral transcription and RNA synthesis. This is RNA-directed RNA polymerase L from Homo sapiens (Human).